A 119-amino-acid polypeptide reads, in one-letter code: Cytochrome c55X (119 aa).

Residues 1-20 (MNAPPDFRRAASHALWLALA) form the signal peptide. Heme c is bound by residues cysteine 51, cysteine 54, and histidine 55.

Binds 1 heme c group covalently per subunit.

The protein resides in the periplasm. Its function is as follows. Monoheme c-type cytochrome. This Pseudomonas aeruginosa (strain ATCC 15692 / DSM 22644 / CIP 104116 / JCM 14847 / LMG 12228 / 1C / PRS 101 / PAO1) protein is Cytochrome c55X (nirC).